The sequence spans 593 residues: Probable serine/threonine-protein kinase fhkA (593 aa).

The interval 1 to 24 is disordered; it reads MSQTNYIPSTPNKSTPPSELSSTP. The FHA domain occupies 54-111; that stretch reads ITIGRSKTCNIVVPELIVSGKHCIITRADAIENGNTNYGLLMIQDQSTNGTFINGKLI. Residues 180–472 enclose the Protein kinase domain; sequence YDFIKELGSG…VEQALNHPWI (293 aa). ATP-binding positions include 186 to 194 and K209; that span reads LGSGNFSVV. D307 acts as the Proton acceptor in catalysis.

Belongs to the protein kinase superfamily. CAMK Ser/Thr protein kinase family. CHK2 subfamily.

It carries out the reaction L-seryl-[protein] + ATP = O-phospho-L-seryl-[protein] + ADP + H(+). The catalysed reaction is L-threonyl-[protein] + ATP = O-phospho-L-threonyl-[protein] + ADP + H(+). This is Probable serine/threonine-protein kinase fhkA (fhkA) from Dictyostelium discoideum (Social amoeba).